The chain runs to 622 residues: 1,4-alpha-glucan branching enzyme GlgB (622 aa).

The active-site Nucleophile is the Asp300. The active-site Proton donor is Glu351.

It belongs to the glycosyl hydrolase 13 family. GlgB subfamily. Monomer.

The enzyme catalyses Transfers a segment of a (1-&gt;4)-alpha-D-glucan chain to a primary hydroxy group in a similar glucan chain.. It functions in the pathway glycan biosynthesis; glycogen biosynthesis. Its function is as follows. Catalyzes the formation of the alpha-1,6-glucosidic linkages in glycogen by scission of a 1,4-alpha-linked oligosaccharide from growing alpha-1,4-glucan chains and the subsequent attachment of the oligosaccharide to the alpha-1,6 position. The polypeptide is 1,4-alpha-glucan branching enzyme GlgB (Streptococcus agalactiae serotype V (strain ATCC BAA-611 / 2603 V/R)).